The following is a 367-amino-acid chain: Glutamate 5-kinase (367 aa).

Lysine 8 provides a ligand contact to ATP. Residues serine 49, aspartate 136, and asparagine 148 each coordinate substrate. ATP contacts are provided by residues 168–169 (TD) and 210–216 (TGGMATK). A PUA domain is found at 275–353 (TGKLYLDRGA…EEIPTILGYS (79 aa)).

Belongs to the glutamate 5-kinase family.

It is found in the cytoplasm. The catalysed reaction is L-glutamate + ATP = L-glutamyl 5-phosphate + ADP. The protein operates within amino-acid biosynthesis; L-proline biosynthesis; L-glutamate 5-semialdehyde from L-glutamate: step 1/2. Its function is as follows. Catalyzes the transfer of a phosphate group to glutamate to form L-glutamate 5-phosphate. The protein is Glutamate 5-kinase of Cyanothece sp. (strain PCC 7425 / ATCC 29141).